The primary structure comprises 161 residues: Phosphopantetheine adenylyltransferase (161 aa).

Serine 11 is a binding site for substrate. ATP-binding positions include 11–12 (SF) and histidine 19. 3 residues coordinate substrate: lysine 43, leucine 75, and arginine 89. Residues 90–92 (GLR), glutamate 100, and 125–131 (YSYLSSS) each bind ATP.

It belongs to the bacterial CoaD family. As to quaternary structure, homohexamer. It depends on Mg(2+) as a cofactor.

Its subcellular location is the cytoplasm. The enzyme catalyses (R)-4'-phosphopantetheine + ATP + H(+) = 3'-dephospho-CoA + diphosphate. It functions in the pathway cofactor biosynthesis; coenzyme A biosynthesis; CoA from (R)-pantothenate: step 4/5. Functionally, reversibly transfers an adenylyl group from ATP to 4'-phosphopantetheine, yielding dephospho-CoA (dPCoA) and pyrophosphate. The chain is Phosphopantetheine adenylyltransferase from Geobacter sp. (strain M21).